Consider the following 956-residue polypeptide: Phosphatidylinositol 4-kinase PIK1a (956 aa).

Positions 1-120 (MPVAPHELRD…QTVRKFINKL (120 aa)) constitute a PIK helical domain. The segment at 545–573 (SRDWAKSTPGSPVARSSQEDEKFYGNVSS) is disordered. A PI3K/PI4K catalytic domain is found at 658–939 (EDWNEKKHRI…YLIEKSVGSM (282 aa)). Positions 664–670 (KHRIRKS) are G-loop. The interval 805–813 (QIKDRHNGN) is catalytic loop. An activation loop region spans residues 824–848 (HIDFGFLLSNSPGSVGFEAAPFKLT).

Belongs to the PI3/PI4-kinase family. Type III PI4K subfamily.

The protein resides in the nucleus. It carries out the reaction a 1,2-diacyl-sn-glycero-3-phospho-(1D-myo-inositol) + ATP = a 1,2-diacyl-sn-glycero-3-phospho-(1D-myo-inositol 4-phosphate) + ADP + H(+). Acts on phosphatidylinositol (PI) in the first committed step in the production of the second messenger inositol 1,4,5,-trisphosphate. This is Phosphatidylinositol 4-kinase PIK1a (PIKA) from Candida albicans (strain SC5314 / ATCC MYA-2876) (Yeast).